A 366-amino-acid polypeptide reads, in one-letter code: Sigma54-dependent transcriptional activator SfnR (366 aa).

The 230-residue stretch at 21–250 folds into the Sigma-54 factor interaction domain; sequence QVFEDPRSQA…LENVIHHSLL (230 aa). ATP contacts are provided by residues 49–56 and 112–121; these read GETGTGKE and ANGGTLFLDE.

Functionally, involved in the dimethyl sulfide degradation pathway. Activates the expression of sfnG and sfnF. This Pseudomonas putida (Arthrobacter siderocapsulatus) protein is Sigma54-dependent transcriptional activator SfnR.